We begin with the raw amino-acid sequence, 150 residues long: Protein-arginine-phosphatase (150 aa).

Catalysis depends on C7, which acts as the Nucleophile. 8 to 13 (TGNTCR) lines the substrate pocket. R13 is an active-site residue. D118 serves as the catalytic Proton donor/acceptor.

Belongs to the low molecular weight phosphotyrosine protein phosphatase family.

The catalysed reaction is N(omega)-phospho-L-arginyl-[protein] + H2O = L-arginyl-[protein] + phosphate. Its activity is regulated as follows. Efficiently inhibited by Cu(2+) ion, Zn(2+) ion, sodium pyrophosphate and N-ethylmaleimide, while the addition of Mg(2+), Ca(2+) or Fe(3+) ions has minimal effect. Inhibited in a competitive manner by vanadate. Its function is as follows. Catalyzes the specific dephosphorylation of phosphoarginine residues in a large number of proteins. Counteracts the protein arginine kinase McsB in vivo. Can dephosphorylate CtsR-P; thus, can restore the DNA-binding ability of the CtsR repressor by reversing the McsB-mediated phosphorylation. Is the only active pArg phosphatase present in B.subtilis. Exhibits almost no activity against pSer, pThr, or pTyr peptides. Appears to play a role in B.subtilis stress resistance. Protein arginine phosphorylation has a physiologically important role and is involved in the regulation of many critical cellular processes, such as protein homeostasis, motility, competence, and stringent and stress responses, by regulating gene expression and protein activity. The polypeptide is Protein-arginine-phosphatase (ywlE) (Bacillus subtilis (strain 168)).